The chain runs to 499 residues: GTPase Der (499 aa).

EngA-type G domains lie at 3-166 and 211-384; these read PVVA…MDEV and IKLA…DCST. GTP is bound by residues 9 to 16, 56 to 60, 118 to 121, 217 to 224, 264 to 268, and 329 to 332; these read GRPNVGKS, DTGGI, NKTD, DTAGV, and NKWD. Residues 385 to 469 form the KH-like domain; it reads RRVNTSMLTR…PIRIQFKEGD (85 aa).

The protein belongs to the TRAFAC class TrmE-Era-EngA-EngB-Septin-like GTPase superfamily. EngA (Der) GTPase family. As to quaternary structure, associates with the 50S ribosomal subunit.

Functionally, GTPase that plays an essential role in the late steps of ribosome biogenesis. This is GTPase Der from Erwinia tasmaniensis (strain DSM 17950 / CFBP 7177 / CIP 109463 / NCPPB 4357 / Et1/99).